The following is a 144-amino-acid chain: Large ribosomal subunit protein uL15 (144 aa).

A disordered region spans residues 1 to 49; sequence MKLNTLSPAAGAKSAAKRVGRGIGSGLGKTAGRGHKGQKSRSGGGVRVG. Residues 21-31 are compositionally biased toward gly residues; that stretch reads RGIGSGLGKTA.

This sequence belongs to the universal ribosomal protein uL15 family. In terms of assembly, part of the 50S ribosomal subunit.

Binds to the 23S rRNA. The chain is Large ribosomal subunit protein uL15 from Shewanella loihica (strain ATCC BAA-1088 / PV-4).